The chain runs to 142 residues: Hemoglobin subunit alpha (142 aa).

In terms of domain architecture, Globin spans 2–142 (VLSGEDKSNI…VSTVLTSKYR (141 aa)). Ser4 carries the post-translational modification Phosphoserine. An N6-succinyllysine mark is found at Lys8 and Lys12. Lys17 is subject to N6-acetyllysine; alternate. Lys17 bears the N6-succinyllysine; alternate mark. Tyr25 carries the post-translational modification Phosphotyrosine. Ser36 is subject to Phosphoserine. At Lys41 the chain carries N6-succinyllysine. Ser50 bears the Phosphoserine mark. His59 provides a ligand contact to O2. His88 provides a ligand contact to heme b. Ser103 carries the phosphoserine modification. Thr109 carries the post-translational modification Phosphothreonine. Residues Ser112, Ser125, and Ser132 each carry the phosphoserine modification. Phosphothreonine occurs at positions 135 and 138. Residue Ser139 is modified to Phosphoserine.

It belongs to the globin family. Heterotetramer of two alpha chains and two beta chains. As to expression, red blood cells.

In terms of biological role, involved in oxygen transport from the lung to the various peripheral tissues. Its function is as follows. Hemopressin acts as an antagonist peptide of the cannabinoid receptor CNR1. Hemopressin-binding efficiently blocks cannabinoid receptor CNR1 and subsequent signaling. The chain is Hemoglobin subunit alpha (Hba) from Mus musculus (Mouse).